The chain runs to 166 residues: 3-hydroxyacyl-[acyl-carrier-protein] dehydratase FabZ (166 aa).

H72 is an active-site residue.

It belongs to the thioester dehydratase family. FabZ subfamily.

The protein localises to the cytoplasm. The enzyme catalyses a (3R)-hydroxyacyl-[ACP] = a (2E)-enoyl-[ACP] + H2O. Its function is as follows. Involved in unsaturated fatty acids biosynthesis. Catalyzes the dehydration of short chain beta-hydroxyacyl-ACPs and long chain saturated and unsaturated beta-hydroxyacyl-ACPs. The protein is 3-hydroxyacyl-[acyl-carrier-protein] dehydratase FabZ of Synechococcus sp. (strain JA-2-3B'a(2-13)) (Cyanobacteria bacterium Yellowstone B-Prime).